Consider the following 282-residue polypeptide: Putative phosphatase MPN_383 (282 aa).

The active-site Nucleophile is the aspartate 11. Aspartate 11 contributes to the Mg(2+) binding site. Leucine 12 contributes to the phosphate binding site. Aspartate 13 serves as a coordination point for Mg(2+). Residues 45-46 (TG) and lysine 207 contribute to the phosphate site. Aspartate 230 is a Mg(2+) binding site. Residue asparagine 233 participates in phosphate binding.

It belongs to the HAD-like hydrolase superfamily. Cof family. Mg(2+) is required as a cofactor.

The chain is Putative phosphatase MPN_383 from Mycoplasma pneumoniae (strain ATCC 29342 / M129 / Subtype 1) (Mycoplasmoides pneumoniae).